An 843-amino-acid chain; its full sequence is MPLSYQHFRKLLLLDEEAGPLEEELPRLADEGLNRRVADDLNLGNLNVSIPWTHKVGNFTGLYSSTVPCFNPKWQTPSFPDIHLQEDIVDRCKQFVGPLTVNENRRLKLIMPARFYPNVTKYLPLDKGIKPYYPEYVVNHYFQTRHYLHTLWEAGILYKRESTRSASFCGSPYSWEQDLQHGRLVFQTSKRHGDKSFCPQSPGILPRSSVGPCIQSQLRKSRLGPQPAQGQLAGRQQGGSGSIRARVHPSPWGTVGVEPSGSGPTHNCASSSSSCLHQSAVRKAAYSLISTSKGHSSSGHAVELHHFPPNSSRSQSQGPVLSCWWLQFRNSEPCSEYCLYHIVNLIEDWGPCTEHGEHRIRTPRTPARVTGGVFLVDKNPHNTTESRLVVDFSQFSRGNTRVSWPKFAVPNLQSLTNLLSSNLSWLSLDVSAAFYHLPLHPAAMPHLLVGSSGLSRYVARLSSNSRIINNQHRTMQNLHNSCSRNLYVSLMLLYKTYGRKLHLYSHPIILGFRKIPMGVGLSPFLLAQFTSAICSVVRRAFPHCLAFSYMDDVVLGAKSVQHLESLYAAVTNFLLSLGIHLNPHKTKRWGYSLNFMGYVIGSWGTLPQEHIVQKIKMCFRKLPVNRPIDWKVCQRIVGLLGFAAPFTQCGYPALMPLYACIQAKQAFTFSPTYKAFLSKQYLNLYPVARQRPGLCQVFADATPTGWGLAIGHQRMRGTFVSPLPIHTAELLAACFARSRSGAKLIGTDNSVVLSRKYTAFPWLLGCAANWILRGTSFVYVPSALNPADDPSRGRLGLYRPLLRLLYRPTTGRTSLYADSPSVPSHLPDRVHFASPLHVAWXPP.

Positions 1–177 (MPLSYQHFRK…FCGSPYSWEQ (177 aa)) are terminal protein domain (TP). Residues 178–346 (DLQHGRLVFQ…YCLYHIVNLI (169 aa)) form a spacer region. The tract at residues 219-250 (RKSRLGPQPAQGQLAGRQQGGSGSIRARVHPS) is disordered. Over residues 223–235 (LGPQPAQGQLAGR) the composition is skewed to low complexity. The polymerase/reverse transcriptase domain (RT) stretch occupies residues 347-690 (EDWGPCTEHG…YLNLYPVARQ (344 aa)). Residues 357–600 (EHRIRTPRTP…YSLNFMGYVI (244 aa)) enclose the Reverse transcriptase domain. Mg(2+)-binding residues include aspartate 429, aspartate 551, and aspartate 552.

This sequence belongs to the hepadnaviridae P protein family.

It catalyses the reaction DNA(n) + a 2'-deoxyribonucleoside 5'-triphosphate = DNA(n+1) + diphosphate. The enzyme catalyses Endonucleolytic cleavage to 5'-phosphomonoester.. Activated by host HSP70 and HSP40 in vitro to be able to bind the epsilon loop of the pgRNA. Because deletion of the RNase H region renders the protein partly chaperone-independent, the chaperones may be needed indirectly to relieve occlusion of the RNA-binding site by this domain. Inhibited by several reverse-transcriptase inhibitors: Lamivudine, Adefovir and Entecavir. Multifunctional enzyme that converts the viral RNA genome into dsDNA in viral cytoplasmic capsids. This enzyme displays a DNA polymerase activity that can copy either DNA or RNA templates, and a ribonuclease H (RNase H) activity that cleaves the RNA strand of RNA-DNA heteroduplexes in a partially processive 3'- to 5'-endonucleasic mode. Neo-synthesized pregenomic RNA (pgRNA) are encapsidated together with the P protein, and reverse-transcribed inside the nucleocapsid. Initiation of reverse-transcription occurs first by binding the epsilon loop on the pgRNA genome, and is initiated by protein priming, thereby the 5'-end of (-)DNA is covalently linked to P protein. Partial (+)DNA is synthesized from the (-)DNA template and generates the relaxed circular DNA (RC-DNA) genome. After budding and infection, the RC-DNA migrates in the nucleus, and is converted into a plasmid-like covalently closed circular DNA (cccDNA). The activity of P protein does not seem to be necessary for cccDNA generation, and is presumably released from (+)DNA by host nuclear DNA repair machinery. This is Protein P from Hepatitis B virus genotype B2 (isolate Vietnam/16091/1992) (HBV-B).